We begin with the raw amino-acid sequence, 432 residues long: Glutamyl-tRNA reductase (432 aa).

Residues 50-53 (TCNR), Ser110, 115-117 (ETQ), and Gln121 contribute to the substrate site. The active-site Nucleophile is Cys51. Residue 190-195 (GVGEMS) participates in NADP(+) binding.

Belongs to the glutamyl-tRNA reductase family. As to quaternary structure, homodimer.

The enzyme catalyses (S)-4-amino-5-oxopentanoate + tRNA(Glu) + NADP(+) = L-glutamyl-tRNA(Glu) + NADPH + H(+). It participates in porphyrin-containing compound metabolism; protoporphyrin-IX biosynthesis; 5-aminolevulinate from L-glutamyl-tRNA(Glu): step 1/2. Functionally, catalyzes the NADPH-dependent reduction of glutamyl-tRNA(Glu) to glutamate 1-semialdehyde (GSA). This Sulfurimonas denitrificans (strain ATCC 33889 / DSM 1251) (Thiomicrospira denitrificans (strain ATCC 33889 / DSM 1251)) protein is Glutamyl-tRNA reductase.